A 278-amino-acid polypeptide reads, in one-letter code: Putative pyruvate, phosphate dikinase regulatory protein (278 aa).

Position 156-163 (156-163 (GVSRTSKT)) interacts with ADP.

It belongs to the pyruvate, phosphate/water dikinase regulatory protein family. PDRP subfamily.

It catalyses the reaction N(tele)-phospho-L-histidyl/L-threonyl-[pyruvate, phosphate dikinase] + ADP = N(tele)-phospho-L-histidyl/O-phospho-L-threonyl-[pyruvate, phosphate dikinase] + AMP + H(+). The enzyme catalyses N(tele)-phospho-L-histidyl/O-phospho-L-threonyl-[pyruvate, phosphate dikinase] + phosphate + H(+) = N(tele)-phospho-L-histidyl/L-threonyl-[pyruvate, phosphate dikinase] + diphosphate. In terms of biological role, bifunctional serine/threonine kinase and phosphorylase involved in the regulation of the pyruvate, phosphate dikinase (PPDK) by catalyzing its phosphorylation/dephosphorylation. This Lactobacillus acidophilus (strain ATCC 700396 / NCK56 / N2 / NCFM) protein is Putative pyruvate, phosphate dikinase regulatory protein.